We begin with the raw amino-acid sequence, 544 residues long: Methionine--tRNA ligase 2 (544 aa).

The 'HIGH' region signature appears at 10 to 20; sequence PYANGSLHLGH. Zn(2+) is bound by residues Cys141, Cys144, Cys153, and Cys156. Positions 329–333 match the 'KMSKS' region motif; that stretch reads KLSTS. Thr332 serves as a coordination point for ATP.

Belongs to the class-I aminoacyl-tRNA synthetase family. MetG type 1 subfamily. As to quaternary structure, monomer. Zn(2+) serves as cofactor.

The protein localises to the cytoplasm. The catalysed reaction is tRNA(Met) + L-methionine + ATP = L-methionyl-tRNA(Met) + AMP + diphosphate. Its function is as follows. Is required not only for elongation of protein synthesis but also for the initiation of all mRNA translation through initiator tRNA(fMet) aminoacylation. The protein is Methionine--tRNA ligase 2 of Bacillus cereus (strain ATCC 14579 / DSM 31 / CCUG 7414 / JCM 2152 / NBRC 15305 / NCIMB 9373 / NCTC 2599 / NRRL B-3711).